The following is a 445-amino-acid chain: Methionine aminopeptidase 2-1 (445 aa).

Residues 1–99 (MAAQVPTEAL…FPNKAYPKGE (99 aa)) form a disordered region. The span at 61–75 (KKKKKRKPKKKKKHP) shows a compositional bias: basic residues. A substrate-binding site is contributed by histidine 198. A divalent metal cation is bound by residues aspartate 218, aspartate 229, and histidine 298. Substrate is bound at residue histidine 306. Positions 331 and 426 each coordinate a divalent metal cation.

The protein belongs to the peptidase M24A family. Methionine aminopeptidase eukaryotic type 2 subfamily. Co(2+) serves as cofactor. It depends on Zn(2+) as a cofactor. Requires Mn(2+) as cofactor. Fe(2+) is required as a cofactor.

It localises to the cytoplasm. It carries out the reaction Release of N-terminal amino acids, preferentially methionine, from peptides and arylamides.. Cotranslationally removes the N-terminal methionine from nascent proteins. The N-terminal methionine is often cleaved when the second residue in the primary sequence is small and uncharged (Met-Ala-, Cys, Gly, Pro, Ser, Thr, or Val). This Fusarium vanettenii (strain ATCC MYA-4622 / CBS 123669 / FGSC 9596 / NRRL 45880 / 77-13-4) (Fusarium solani subsp. pisi) protein is Methionine aminopeptidase 2-1.